A 428-amino-acid polypeptide reads, in one-letter code: MFIDEVIITVKAGNGGDGSAAFRREKFVQFGGPDGGDGGKGGDVIFVADSNINTLIDFKFKKLFKAQNGENGQKKQMYGKKGEDLIIKVPVGTQVRDFTTGKLILDMSVNGEQRVLLKGGKGGYGNVHFKNSIRKAPKIAEKGGEGAEIKVKLELKLLADVALVGYPSVGKSSFINKVSAANSKVGSYHFTTLEPKLGVVRLEEGKSFVIADIPGLIEGAHEGVGLGDKFLKHIERCKMIYHIVDVAEIEGRDCIEDFEKINHELKKFSEKLAGKKQIVIANKMDLIWDMEKFEKFKSYLAEKGIEIYPVSVLLNEGLKEILYKTYDMLSRIEREPLEEETDITKLLKELKIEKEDFEIIRDEEDAIVVGGRIVDDVLAKYVIGMDDESLVTFLHMMRSLGMEEALQEFGVQDGDTVKIADVEFEYFE.

One can recognise an Obg domain in the interval 1-158 (MFIDEVIITV…IKVKLELKLL (158 aa)). The OBG-type G domain maps to 159 to 330 (ADVALVGYPS…ILYKTYDMLS (172 aa)). Residues 165-172 (GYPSVGKS), 190-194 (FTTLE), 212-215 (DIPG), 282-285 (NKMD), and 311-313 (SVL) each bind GTP. The Mg(2+) site is built by serine 172 and threonine 192. The 80-residue stretch at 349–428 (ELKIEKEDFE…IADVEFEYFE (80 aa)) folds into the OCT domain.

Belongs to the TRAFAC class OBG-HflX-like GTPase superfamily. OBG GTPase family. Monomer. Requires Mg(2+) as cofactor.

It localises to the cytoplasm. Its function is as follows. An essential GTPase which binds GTP, GDP and possibly (p)ppGpp with moderate affinity, with high nucleotide exchange rates and a fairly low GTP hydrolysis rate. Plays a role in control of the cell cycle, stress response, ribosome biogenesis and in those bacteria that undergo differentiation, in morphogenesis control. This Fusobacterium nucleatum subsp. nucleatum (strain ATCC 25586 / DSM 15643 / BCRC 10681 / CIP 101130 / JCM 8532 / KCTC 2640 / LMG 13131 / VPI 4355) protein is GTPase Obg.